Consider the following 459-residue polypeptide: Putrescine aminotransferase (459 aa).

Residues G150–T151 and Q274 contribute to the pyridoxal 5'-phosphate site. K300 carries the N6-(pyridoxal phosphate)lysine modification. Pyridoxal 5'-phosphate is bound at residue T332.

This sequence belongs to the class-III pyridoxal-phosphate-dependent aminotransferase family. Putrescine aminotransferase subfamily. Requires pyridoxal 5'-phosphate as cofactor.

The enzyme catalyses an alkane-alpha,omega-diamine + 2-oxoglutarate = an omega-aminoaldehyde + L-glutamate. The catalysed reaction is putrescine + 2-oxoglutarate = 1-pyrroline + L-glutamate + H2O. It carries out the reaction cadaverine + 2-oxoglutarate = 5-aminopentanal + L-glutamate. The protein operates within amine and polyamine degradation; putrescine degradation; 4-aminobutanal from putrescine (transaminase route): step 1/1. Functionally, catalyzes the aminotransferase reaction from putrescine to 2-oxoglutarate, leading to glutamate and 4-aminobutanal, which spontaneously cyclizes to form 1-pyrroline. This is the first step in one of two pathways for putrescine degradation, where putrescine is converted into 4-aminobutanoate (gamma-aminobutyrate or GABA) via 4-aminobutanal. Also functions as a cadaverine transaminase in a a L-lysine degradation pathway to succinate that proceeds via cadaverine, glutarate and L-2-hydroxyglutarate. This Klebsiella pneumoniae subsp. pneumoniae (strain ATCC 700721 / MGH 78578) protein is Putrescine aminotransferase.